Consider the following 247-residue polypeptide: Probable transcriptional regulatory protein DVU_2259 (247 aa).

The segment at 1-22 is disordered; it reads MAGHSKWANIQHRKGRQDAKRG.

This sequence belongs to the TACO1 family.

It localises to the cytoplasm. The protein is Probable transcriptional regulatory protein DVU_2259 of Nitratidesulfovibrio vulgaris (strain ATCC 29579 / DSM 644 / CCUG 34227 / NCIMB 8303 / VKM B-1760 / Hildenborough) (Desulfovibrio vulgaris).